A 126-amino-acid chain; its full sequence is Protein ApaG (126 aa).

The ApaG domain occupies 2 to 126 (SDPRYQVDVS…FRLAVPGALH (125 aa)).

This chain is Protein ApaG, found in Pseudomonas fluorescens (strain Pf0-1).